Here is a 274-residue protein sequence, read N- to C-terminus: Ubiquinone biosynthesis O-methyltransferase, mitochondrial (274 aa).

A mitochondrion-targeting transit peptide spans 1 to 30 (MNSMNILNKVKNVKSYTRLVRQGFLSQQRN). S-adenosyl-L-methionine contacts are provided by Arg65, Gly88, Asp109, and Met154. Residues Glu155, Glu158, and His159 each contribute to the Mg(2+) site.

Belongs to the class I-like SAM-binding methyltransferase superfamily. UbiG/COQ3 family. Component of a multi-subunit COQ enzyme complex, composed of at least coq3, coq4, coq5, coq6, coq7 and coq9. Mg(2+) serves as cofactor.

It is found in the mitochondrion inner membrane. The catalysed reaction is 3,4-dihydroxy-5-(all-trans-decaprenyl)benzoate + S-adenosyl-L-methionine = 4-hydroxy-3-methoxy-5-(all-trans-decaprenyl)benzoate + S-adenosyl-L-homocysteine + H(+). It carries out the reaction a 3-demethylubiquinone + S-adenosyl-L-methionine = a ubiquinone + S-adenosyl-L-homocysteine. It catalyses the reaction 3-demethylubiquinol-10 + S-adenosyl-L-methionine = ubiquinol-10 + S-adenosyl-L-homocysteine + H(+). It functions in the pathway cofactor biosynthesis; ubiquinone biosynthesis. O-methyltransferase required for two non-consecutive steps during ubiquinone biosynthesis. Catalyzes the 2 O-methylation of 3,4-dihydroxy-5-(all-trans-decaprenyl)benzoic acid into 4-hydroxy-3-methoxy-5-(all-trans-decaprenyl)benzoic acid. Also catalyzes the last step of ubiquinone biosynthesis by mediating methylation of 3-demethylubiquinone into ubiquinone. Also able to mediate the methylation of 3-demethylubiquinol-10 into ubiquinol-10. This chain is Ubiquinone biosynthesis O-methyltransferase, mitochondrial, found in Schizosaccharomyces pombe (strain 972 / ATCC 24843) (Fission yeast).